Here is a 108-residue protein sequence, read N- to C-terminus: Pyrimidine/purine nucleoside phosphorylase (108 aa).

This sequence belongs to the nucleoside phosphorylase PpnP family.

The enzyme catalyses a purine D-ribonucleoside + phosphate = a purine nucleobase + alpha-D-ribose 1-phosphate. It catalyses the reaction adenosine + phosphate = alpha-D-ribose 1-phosphate + adenine. The catalysed reaction is cytidine + phosphate = cytosine + alpha-D-ribose 1-phosphate. It carries out the reaction guanosine + phosphate = alpha-D-ribose 1-phosphate + guanine. The enzyme catalyses inosine + phosphate = alpha-D-ribose 1-phosphate + hypoxanthine. It catalyses the reaction thymidine + phosphate = 2-deoxy-alpha-D-ribose 1-phosphate + thymine. The catalysed reaction is uridine + phosphate = alpha-D-ribose 1-phosphate + uracil. It carries out the reaction xanthosine + phosphate = alpha-D-ribose 1-phosphate + xanthine. In terms of biological role, catalyzes the phosphorolysis of diverse nucleosides, yielding D-ribose 1-phosphate and the respective free bases. Can use uridine, adenosine, guanosine, cytidine, thymidine, inosine and xanthosine as substrates. Also catalyzes the reverse reactions. This chain is Pyrimidine/purine nucleoside phosphorylase, found in Acinetobacter baylyi (strain ATCC 33305 / BD413 / ADP1).